We begin with the raw amino-acid sequence, 185 residues long: Ribosome-recycling factor (185 aa).

Belongs to the RRF family.

Its subcellular location is the cytoplasm. Responsible for the release of ribosomes from messenger RNA at the termination of protein biosynthesis. May increase the efficiency of translation by recycling ribosomes from one round of translation to another. This Neisseria gonorrhoeae (strain ATCC 700825 / FA 1090) protein is Ribosome-recycling factor.